The sequence spans 348 residues: tRNA pseudouridine synthase D (348 aa).

Phenylalanine 27 provides a ligand contact to substrate. Residue aspartate 80 is the Nucleophile of the active site. Substrate is bound at residue asparagine 129. Positions 155–303 (GVPNYFGSQR…VEPARRAVLL (149 aa)) constitute a TRUD domain. Position 329 (phenylalanine 329) interacts with substrate.

This sequence belongs to the pseudouridine synthase TruD family.

The enzyme catalyses uridine(13) in tRNA = pseudouridine(13) in tRNA. Responsible for synthesis of pseudouridine from uracil-13 in transfer RNAs. In Pectobacterium atrosepticum (strain SCRI 1043 / ATCC BAA-672) (Erwinia carotovora subsp. atroseptica), this protein is tRNA pseudouridine synthase D.